The chain runs to 504 residues: Potassium voltage-gated channel subfamily V member 1 (504 aa).

Disordered stretches follow at residues 1-22 (MDLS…GGSL) and 172-193 (KKDT…QGPC). Residues 1–214 (MDLSPRNRPL…EKPGSSTAAR (214 aa)) lie on the Cytoplasmic side of the membrane. Low complexity predominate over residues 10 to 22 (LLESSSLDSGGSL). The span at 172-185 (KKDTDDQESQHESE) shows a compositional bias: basic and acidic residues. Residues 215-235 (IFGVISIIFVAVSIVNMALMS) traverse the membrane as a helical segment. The Extracellular segment spans residues 236–242 (AELSWLN). Residues 243–263 (LQLLEILEYVCISWFTGEFIL) traverse the membrane as a helical segment. At 264 to 280 (RFLCVKDRCRFLRKVPN) the chain is on the cytoplasmic side. A helical membrane pass occupies residues 281 to 301 (IIDLLAILPFYITLLVESLSG). The Extracellular segment spans residues 302-313 (SHTTQELENVGR). The chain crosses the membrane as a helical; Voltage-sensor span at residues 314 to 335 (LVQVLRLLRALRMLKLGRHSTG). Residues 336 to 349 (LRSLGMTITQCYEE) lie on the Cytoplasmic side of the membrane. The chain crosses the membrane as a helical span at residues 350–370 (VGLLLLFLSVGISIFSTIEYF). The short motif at 396–401 (TVGYGD) is the Selectivity filter element. Residues 411–431 (IVAFMCILSGILVLALPIAII) traverse the membrane as a helical segment. Residues 432–504 (NDRFSACYFT…RSSGGDDFWF (73 aa)) lie on the Cytoplasmic side of the membrane.

This sequence belongs to the potassium channel family. V (TC 1.A.1.2) subfamily. Kv8.1/KCNV1 sub-subfamily. In terms of assembly, heteromultimer with KCNB1 and KCNB2. Interacts with KCNC4 and KCND1. Detected in brain, throughout layers II, IV and VI of the brain cortex. Detected in cerebellum and hippocampus, in the granule cell layer, Purkinje cell layer, pyramidal cell layer and dentate gyrus. Detected at lower levels in olfactory bulb, amygdala, thalamus, hypothalamus, midbrain and brainstem.

The protein resides in the cell membrane. In terms of biological role, potassium channel subunit that does not form functional channels by itself. Modulates KCNB1 and KCNB2 channel activity by shifting the threshold for inactivation to more negative values and by slowing the rate of inactivation. Can down-regulate the channel activity of KCNB1, KCNB2, KCNC4 and KCND1, possibly by trapping them in intracellular membranes. In Mesocricetus auratus (Golden hamster), this protein is Potassium voltage-gated channel subfamily V member 1 (KCNV1).